The primary structure comprises 256 residues: MSLTIKEIKEKLSRIETLEELHKHEANNDSRKGVINAIKSREKNILKQQALEEHYLSMNQYENNIMSSNRDALICGIDEVGRGPLAGPVVACAVILEKNHHYIGLDDSKKVSPKNRARLNQNLKENVYQYAYGIASSVEIDELNIYRATQLAMLRAINQLDVTPTHLLIDAMTLDIDIPQTSIIKGDAKSVSIAAASIMAKEYRDQYMRQLSKQFPEYGFDKNAGYGTKQHLKAIDQVGIINEHRQSFEPIKSMMK.

The region spanning 72–256 (ALICGIDEVG…SFEPIKSMMK (185 aa)) is the RNase H type-2 domain. Positions 78, 79, and 170 each coordinate a divalent metal cation.

The protein belongs to the RNase HII family. The cofactor is Mn(2+). It depends on Mg(2+) as a cofactor.

The protein resides in the cytoplasm. It catalyses the reaction Endonucleolytic cleavage to 5'-phosphomonoester.. Functionally, endonuclease that specifically degrades the RNA of RNA-DNA hybrids. This is Ribonuclease HII from Staphylococcus epidermidis (strain ATCC 12228 / FDA PCI 1200).